A 703-amino-acid polypeptide reads, in one-letter code: Polyribonucleotide nucleotidyltransferase (703 aa).

Mg(2+) contacts are provided by D489 and D495. In terms of domain architecture, KH spans 556–615 (PTMIAMKIDTDKIRDVIGKGGATIRAICEETKASIDIEDDGSIKIFGETKEAAEAARQRV). Residues 625 to 693 (GKIYVGKVER…NRGRIKLSIK (69 aa)) enclose the S1 motif domain.

The protein belongs to the polyribonucleotide nucleotidyltransferase family. As to quaternary structure, component of the RNA degradosome, which is a multiprotein complex involved in RNA processing and mRNA degradation. Mg(2+) serves as cofactor.

It is found in the cytoplasm. The enzyme catalyses RNA(n+1) + phosphate = RNA(n) + a ribonucleoside 5'-diphosphate. Its function is as follows. Involved in mRNA degradation. Catalyzes the phosphorolysis of single-stranded polyribonucleotides processively in the 3'- to 5'-direction. This Pseudomonas fluorescens (strain ATCC BAA-477 / NRRL B-23932 / Pf-5) protein is Polyribonucleotide nucleotidyltransferase.